Consider the following 424-residue polypeptide: Serine--tRNA ligase (424 aa).

Position 229-231 (229-231 (TAE)) interacts with L-serine. 260 to 262 (RSE) serves as a coordination point for ATP. An L-serine-binding site is contributed by Glu283. ATP is bound at residue 347–350 (EISS). L-serine is bound at residue Ser383.

The protein belongs to the class-II aminoacyl-tRNA synthetase family. Type-1 seryl-tRNA synthetase subfamily. In terms of assembly, homodimer. The tRNA molecule binds across the dimer.

It localises to the cytoplasm. It carries out the reaction tRNA(Ser) + L-serine + ATP = L-seryl-tRNA(Ser) + AMP + diphosphate + H(+). The enzyme catalyses tRNA(Sec) + L-serine + ATP = L-seryl-tRNA(Sec) + AMP + diphosphate + H(+). It participates in aminoacyl-tRNA biosynthesis; selenocysteinyl-tRNA(Sec) biosynthesis; L-seryl-tRNA(Sec) from L-serine and tRNA(Sec): step 1/1. Catalyzes the attachment of serine to tRNA(Ser). Is also able to aminoacylate tRNA(Sec) with serine, to form the misacylated tRNA L-seryl-tRNA(Sec), which will be further converted into selenocysteinyl-tRNA(Sec). In Gluconacetobacter diazotrophicus (strain ATCC 49037 / DSM 5601 / CCUG 37298 / CIP 103539 / LMG 7603 / PAl5), this protein is Serine--tRNA ligase.